Consider the following 603-residue polypeptide: Phosphomethylpyrimidine synthase (603 aa).

Residues asparagine 224, methionine 253, tyrosine 282, histidine 318, 338-340 (SRG), 379-382 (DGLR), and glutamate 418 contribute to the substrate site. Position 422 (histidine 422) interacts with Zn(2+). Tyrosine 445 is a binding site for substrate. Residue histidine 486 participates in Zn(2+) binding. Positions 566, 569, and 574 each coordinate [4Fe-4S] cluster.

It belongs to the ThiC family. In terms of assembly, homodimer. Requires [4Fe-4S] cluster as cofactor.

The enzyme catalyses 5-amino-1-(5-phospho-beta-D-ribosyl)imidazole + S-adenosyl-L-methionine = 4-amino-2-methyl-5-(phosphooxymethyl)pyrimidine + CO + 5'-deoxyadenosine + formate + L-methionine + 3 H(+). Its pathway is cofactor biosynthesis; thiamine diphosphate biosynthesis. Functionally, catalyzes the synthesis of the hydroxymethylpyrimidine phosphate (HMP-P) moiety of thiamine from aminoimidazole ribotide (AIR) in a radical S-adenosyl-L-methionine (SAM)-dependent reaction. This Xylella fastidiosa (strain Temecula1 / ATCC 700964) protein is Phosphomethylpyrimidine synthase.